The following is a 152-amino-acid chain: Large ribosomal subunit protein bL9 (152 aa).

The protein belongs to the bacterial ribosomal protein bL9 family.

Its function is as follows. Binds to the 23S rRNA. The polypeptide is Large ribosomal subunit protein bL9 (Chlorobaculum tepidum (strain ATCC 49652 / DSM 12025 / NBRC 103806 / TLS) (Chlorobium tepidum)).